We begin with the raw amino-acid sequence, 319 residues long: ADP-ribosyl cyclase/cyclic ADP-ribose hydrolase 2 (319 aa).

An N-terminal signal peptide occupies residues Met-1 to Ala-33. 3 cysteine pairs are disulfide-bonded: Cys-52–Cys-68, Cys-84–Cys-164, and Cys-145–Cys-158. Residues Asn-67 and Asn-96 are each glycosylated (N-linked (GlcNAc...) asparagine). Trp-110 is an NAD(+) binding site. Trp-110 contacts nicotinamide. N-linked (GlcNAc...) asparagine glycosylation occurs at Asn-149. Residue Trp-173 participates in NAD(+) binding. A glycan (N-linked (GlcNAc...) asparagine) is linked at Asn-193. Glu-211 is a binding site for NAD(+). Cystine bridges form between Cys-239–Cys-260 and Cys-272–Cys-281. Residue Ser-294 is the site of GPI-anchor amidated serine attachment. Positions Pro-295–Ala-319 are excised as a propeptide.

It belongs to the ADP-ribosyl cyclase family. As to quaternary structure, homodimer. In terms of tissue distribution, pancreatic islets, kidney, spleen, heart, thymus, intestine and salivary gland.

It localises to the cell membrane. It carries out the reaction NAD(+) + H2O = ADP-D-ribose + nicotinamide + H(+). The catalysed reaction is NAD(+) = cyclic ADP-beta-D-ribose + nicotinamide + H(+). The enzyme catalyses cyclic ADP-beta-D-ribose + H2O = ADP-D-ribose. Catalyzes both the synthesis of cyclic ADP-beta-D-ribose (cADPR) from NAD(+), and its hydrolysis to ADP-D-ribose (ADPR). Cyclic ADPR is known to serve as an endogenous second messenger that elicits calcium release from intracellular stores, and thus regulates the mobilization of intracellular calcium. May be involved in pre-B-cell growth. This Rattus norvegicus (Rat) protein is ADP-ribosyl cyclase/cyclic ADP-ribose hydrolase 2 (Bst1).